The chain runs to 229 residues: MAKYKALASLRYLACLVFLPWGISISFQKGLEPWVTNWWNTGQSREFSDYLQEENALERFGEIEELFLLERMVEDSSETHSQDLRIEIRKKTIQLVEMYNEDLIQIISHLLANFICFATPGAYFILGKEKLVVLNSWIQELFHSLSDTMKAFSILLVTDLCIGFHSPHGWELMIDSISENYGFSHDEQRISGLVSTFPVISDTIFKYWIFRHLNRISPSLVVIYHSMNE.

The next 2 helical transmembrane spans lie at 7–27 (LASL…SISF) and 106–126 (IISH…YFIL).

This sequence belongs to the CemA family.

Its subcellular location is the plastid. The protein localises to the chloroplast inner membrane. It carries out the reaction K(+)(in) + H(+)(out) = K(+)(out) + H(+)(in). In terms of biological role, contributes to K(+)/H(+) antiport activity by supporting proton efflux to control proton extrusion and homeostasis in chloroplasts in a light-dependent manner to modulate photosynthesis. Prevents excessive induction of non-photochemical quenching (NPQ) under continuous-light conditions. Indirectly promotes efficient inorganic carbon uptake into chloroplasts. This chain is Potassium/proton antiporter CemA, found in Cycas taitungensis (Prince sago).